Consider the following 284-residue polypeptide: 2-dehydro-3-deoxyphosphooctonate aldolase (284 aa).

Belongs to the KdsA family.

The protein resides in the cytoplasm. The enzyme catalyses D-arabinose 5-phosphate + phosphoenolpyruvate + H2O = 3-deoxy-alpha-D-manno-2-octulosonate-8-phosphate + phosphate. The protein operates within carbohydrate biosynthesis; 3-deoxy-D-manno-octulosonate biosynthesis; 3-deoxy-D-manno-octulosonate from D-ribulose 5-phosphate: step 2/3. It functions in the pathway bacterial outer membrane biogenesis; lipopolysaccharide biosynthesis. The protein is 2-dehydro-3-deoxyphosphooctonate aldolase of Klebsiella pneumoniae subsp. pneumoniae (strain ATCC 700721 / MGH 78578).